Here is a 171-residue protein sequence, read N- to C-terminus: uncharacterized protein (171 aa).

This is an uncharacterized protein from Aedes vexans (Inland floodwater mosquito).